The following is a 380-amino-acid chain: Anhydro-N-acetylmuramic acid kinase (380 aa).

17–24 (GTSMDGAD) contacts ATP.

It belongs to the anhydro-N-acetylmuramic acid kinase family.

The enzyme catalyses 1,6-anhydro-N-acetyl-beta-muramate + ATP + H2O = N-acetyl-D-muramate 6-phosphate + ADP + H(+). Its pathway is amino-sugar metabolism; 1,6-anhydro-N-acetylmuramate degradation. It participates in cell wall biogenesis; peptidoglycan recycling. Functionally, catalyzes the specific phosphorylation of 1,6-anhydro-N-acetylmuramic acid (anhMurNAc) with the simultaneous cleavage of the 1,6-anhydro ring, generating MurNAc-6-P. Is required for the utilization of anhMurNAc either imported from the medium or derived from its own cell wall murein, and thus plays a role in cell wall recycling. This chain is Anhydro-N-acetylmuramic acid kinase, found in Cupriavidus metallidurans (strain ATCC 43123 / DSM 2839 / NBRC 102507 / CH34) (Ralstonia metallidurans).